Reading from the N-terminus, the 368-residue chain is Flagellar P-ring protein (368 aa).

The N-terminal stretch at 1–24 (MTLTRPLALISALAALILALPADA) is a signal peptide.

It belongs to the FlgI family. As to quaternary structure, the basal body constitutes a major portion of the flagellar organelle and consists of four rings (L,P,S, and M) mounted on a central rod.

It is found in the periplasm. It localises to the bacterial flagellum basal body. Assembles around the rod to form the L-ring and probably protects the motor/basal body from shearing forces during rotation. The sequence is that of Flagellar P-ring protein from Methylobacillus flagellatus (strain ATCC 51484 / DSM 6875 / VKM B-1610 / KT).